A 205-amino-acid chain; its full sequence is Large ribosomal subunit protein uL18 (205 aa).

The protein belongs to the universal ribosomal protein uL18 family. In terms of assembly, part of the 50S ribosomal subunit. Contacts the 5S and 23S rRNAs.

In terms of biological role, this is one of the proteins that bind and probably mediate the attachment of the 5S RNA into the large ribosomal subunit, where it forms part of the central protuberance. The protein is Large ribosomal subunit protein uL18 of Haloquadratum walsbyi (strain DSM 16790 / HBSQ001).